The chain runs to 217 residues: Probable transaldolase (217 aa).

The active-site Schiff-base intermediate with substrate is the K85.

Belongs to the transaldolase family. Type 3B subfamily.

Its subcellular location is the cytoplasm. It catalyses the reaction D-sedoheptulose 7-phosphate + D-glyceraldehyde 3-phosphate = D-erythrose 4-phosphate + beta-D-fructose 6-phosphate. It participates in carbohydrate degradation; pentose phosphate pathway; D-glyceraldehyde 3-phosphate and beta-D-fructose 6-phosphate from D-ribose 5-phosphate and D-xylulose 5-phosphate (non-oxidative stage): step 2/3. Transaldolase is important for the balance of metabolites in the pentose-phosphate pathway. This is Probable transaldolase from Brachyspira hyodysenteriae (strain ATCC 49526 / WA1).